Reading from the N-terminus, the 84-residue chain is U8-theraphotoxin-Hhn1f (84 aa).

A signal peptide spans 1 to 21 (MKVVLLVCLVWMMAMMELVSC). Cystine bridges form between Cys23-Cys35, Cys29-Cys44, Cys34-Cys67, Cys54-Cys75, and Cys69-Cys81.

This sequence belongs to the AVIT (prokineticin) family. In terms of tissue distribution, expressed by the venom gland.

The protein resides in the secreted. This is U8-theraphotoxin-Hhn1f from Cyriopagopus hainanus (Chinese bird spider).